A 618-amino-acid chain; its full sequence is 1-deoxy-D-xylulose-5-phosphate synthase (618 aa).

Residues histidine 72 and 113–115 (GHA) contribute to the thiamine diphosphate site. Residue aspartate 144 participates in Mg(2+) binding. Thiamine diphosphate contacts are provided by residues 145–146 (GA), asparagine 173, histidine 284, and glutamate 359. Residue asparagine 173 participates in Mg(2+) binding.

It belongs to the transketolase family. DXPS subfamily. Homodimer. The cofactor is Mg(2+). Requires thiamine diphosphate as cofactor.

The catalysed reaction is D-glyceraldehyde 3-phosphate + pyruvate + H(+) = 1-deoxy-D-xylulose 5-phosphate + CO2. It functions in the pathway metabolic intermediate biosynthesis; 1-deoxy-D-xylulose 5-phosphate biosynthesis; 1-deoxy-D-xylulose 5-phosphate from D-glyceraldehyde 3-phosphate and pyruvate: step 1/1. Catalyzes the acyloin condensation reaction between C atoms 2 and 3 of pyruvate and glyceraldehyde 3-phosphate to yield 1-deoxy-D-xylulose-5-phosphate (DXP). This is 1-deoxy-D-xylulose-5-phosphate synthase from Dictyoglomus turgidum (strain DSM 6724 / Z-1310).